A 346-amino-acid polypeptide reads, in one-letter code: UDP-3-O-acylglucosamine N-acyltransferase (346 aa).

Residue histidine 240 is the Proton acceptor of the active site.

Belongs to the transferase hexapeptide repeat family. LpxD subfamily. As to quaternary structure, homotrimer.

It catalyses the reaction a UDP-3-O-[(3R)-3-hydroxyacyl]-alpha-D-glucosamine + a (3R)-hydroxyacyl-[ACP] = a UDP-2-N,3-O-bis[(3R)-3-hydroxyacyl]-alpha-D-glucosamine + holo-[ACP] + H(+). It functions in the pathway bacterial outer membrane biogenesis; LPS lipid A biosynthesis. In terms of biological role, catalyzes the N-acylation of UDP-3-O-acylglucosamine using 3-hydroxyacyl-ACP as the acyl donor. Is involved in the biosynthesis of lipid A, a phosphorylated glycolipid that anchors the lipopolysaccharide to the outer membrane of the cell. This Bacteroides fragilis (strain ATCC 25285 / DSM 2151 / CCUG 4856 / JCM 11019 / LMG 10263 / NCTC 9343 / Onslow / VPI 2553 / EN-2) protein is UDP-3-O-acylglucosamine N-acyltransferase.